We begin with the raw amino-acid sequence, 376 residues long: TelA-like protein SERP0976 (376 aa).

It belongs to the TelA family.

This Staphylococcus epidermidis (strain ATCC 35984 / DSM 28319 / BCRC 17069 / CCUG 31568 / BM 3577 / RP62A) protein is TelA-like protein SERP0976.